The following is a 545-amino-acid chain: CTP synthase (545 aa).

Residues 1 to 266 are amidoligase domain; the sequence is MTTNYIFVTG…DDYICKRFSL (266 aa). Ser-14 is a CTP binding site. Ser-14 lines the UTP pocket. Residues 15-20 and Asp-72 contribute to the ATP site; that span reads SLGKGI. Mg(2+)-binding residues include Asp-72 and Glu-140. CTP contacts are provided by residues 147-149, 187-192, and Lys-223; these read DIE and KTKPTQ. UTP contacts are provided by residues 187-192 and Lys-223; that span reads KTKPTQ. 239–241 contributes to the ATP binding site; the sequence is KDV. The Glutamine amidotransferase type-1 domain occupies 291 to 542; that stretch reads TIGMVGKYIE…VKAASEHQKR (252 aa). Position 352 (Gly-352) interacts with L-glutamine. Cys-379 (nucleophile; for glutamine hydrolysis) is an active-site residue. Residues 380–383, Glu-403, and Arg-470 each bind L-glutamine; that span reads LGMQ. Catalysis depends on residues His-515 and Glu-517.

It belongs to the CTP synthase family. Homotetramer.

The enzyme catalyses UTP + L-glutamine + ATP + H2O = CTP + L-glutamate + ADP + phosphate + 2 H(+). It carries out the reaction L-glutamine + H2O = L-glutamate + NH4(+). It catalyses the reaction UTP + NH4(+) + ATP = CTP + ADP + phosphate + 2 H(+). It functions in the pathway pyrimidine metabolism; CTP biosynthesis via de novo pathway; CTP from UDP: step 2/2. With respect to regulation, allosterically activated by GTP, when glutamine is the substrate; GTP has no effect on the reaction when ammonia is the substrate. The allosteric effector GTP functions by stabilizing the protein conformation that binds the tetrahedral intermediate(s) formed during glutamine hydrolysis. Inhibited by the product CTP, via allosteric rather than competitive inhibition. Its function is as follows. Catalyzes the ATP-dependent amination of UTP to CTP with either L-glutamine or ammonia as the source of nitrogen. Regulates intracellular CTP levels through interactions with the four ribonucleotide triphosphates. The chain is CTP synthase from Salmonella arizonae (strain ATCC BAA-731 / CDC346-86 / RSK2980).